Consider the following 102-residue polypeptide: Putative defensin-like protein 298 (102 aa).

The N-terminal stretch at 1-29 (MSASKATMLILFALFLSDILLVSIPRAEA) is a signal peptide. 6 disulfide bridges follow: Cys35/Cys53, Cys41/Cys58, Cys46/Cys60, Cys74/Cys93, Cys80/Cys98, and Cys86/Cys100.

This sequence belongs to the DEFL family.

It is found in the secreted. The protein is Putative defensin-like protein 298 of Arabidopsis thaliana (Mouse-ear cress).